Here is a 271-residue protein sequence, read N- to C-terminus: MVATVVNVQVKNEEKIETAPKKVVFDTKNLNLWYGEDHALKDINLSIHENEVTAIIGPSGCGKSTYLKTLNRMVELVPIVRTTGVIEYRERNIFDKSYPVEELRTHVGMVFQKPNPFPKSIYENVTYGPKIHGIRDKKTLDEIVEKSLRGAAIWDELKDRLHDNAYGLSGGQQQRLCIARCLAIEPDVILMDEPTSALDPISTLKVEELIQELKKDFSIVIVTHNMQQAARISDKTAFFLSGEVVEYTDTNKLFTTPSDKRTEDYITGRFG.

Residues 25-266 (FDTKNLNLWY…PSDKRTEDYI (242 aa)) form the ABC transporter domain. Position 57-64 (57-64 (GPSGCGKS)) interacts with ATP.

Belongs to the ABC transporter superfamily. Phosphate importer (TC 3.A.1.7) family. In terms of assembly, the complex is composed of two ATP-binding proteins (PstB), two transmembrane proteins (PstC and PstA) and a solute-binding protein (PstS).

It localises to the cell membrane. It carries out the reaction phosphate(out) + ATP + H2O = ADP + 2 phosphate(in) + H(+). Part of the ABC transporter complex PstSACB involved in phosphate import. Responsible for energy coupling to the transport system. In Bacillus cereus (strain ATCC 14579 / DSM 31 / CCUG 7414 / JCM 2152 / NBRC 15305 / NCIMB 9373 / NCTC 2599 / NRRL B-3711), this protein is Phosphate import ATP-binding protein PstB.